The sequence spans 642 residues: Serine/threonine-protein kinase pakA (642 aa).

2 stretches are compositionally biased toward polar residues: residues 1 to 12 (MSLKKQQQQSDF) and 38 to 48 (LRQSASFTALN). Residues 1 to 82 (MSLKKQQQQS…GFGTKPRRKN (82 aa)) form a disordered region. A CRIB domain is found at 100–113 (ISAPENPVHVTHVG). Disordered regions lie at residues 180 to 276 (GEYP…PIPE) and 317 to 338 (QLDR…RTRQ). 2 stretches are compositionally biased toward low complexity: residues 217 to 227 (SQSSPVPVLSS) and 254 to 266 (VVSN…RPAN). One can recognise a Protein kinase domain in the interval 361-612 (YYNLNKIGQG…AHDLLKHPFM (252 aa)). ATP-binding positions include 367–375 (IGQGASGGV) and K390. The active-site Proton acceptor is D480.

The protein belongs to the protein kinase superfamily. STE Ser/Thr protein kinase family. STE20 subfamily.

Its subcellular location is the cytoplasm. The protein resides in the nucleus. It carries out the reaction L-seryl-[protein] + ATP = O-phospho-L-seryl-[protein] + ADP + H(+). The catalysed reaction is L-threonyl-[protein] + ATP = O-phospho-L-threonyl-[protein] + ADP + H(+). In terms of biological role, MAP4K component of the MAPK pathway required for the mating pheromone response and the regulation of cell polarity and cell cycle. The polypeptide is Serine/threonine-protein kinase pakA (pakA) (Talaromyces marneffei (Penicillium marneffei)).